Consider the following 426-residue polypeptide: Tyrosine--tRNA ligase (426 aa).

Position 38 (Tyr38) interacts with L-tyrosine. A 'HIGH' region motif is present at residues 43–52 (PTADSLHIGS). Residues Tyr176 and Gln180 each contribute to the L-tyrosine site. A 'KMSKS' region motif is present at residues 236–240 (KFGKT). Position 239 (Lys239) interacts with ATP. The 68-residue stretch at 359-426 (QTIVEVLTQS…KKLFNLYIWK (68 aa)) folds into the S4 RNA-binding domain.

Belongs to the class-I aminoacyl-tRNA synthetase family. TyrS type 1 subfamily. Homodimer.

The protein localises to the cytoplasm. It carries out the reaction tRNA(Tyr) + L-tyrosine + ATP = L-tyrosyl-tRNA(Tyr) + AMP + diphosphate + H(+). Catalyzes the attachment of tyrosine to tRNA(Tyr) in a two-step reaction: tyrosine is first activated by ATP to form Tyr-AMP and then transferred to the acceptor end of tRNA(Tyr). The polypeptide is Tyrosine--tRNA ligase (Aliivibrio salmonicida (strain LFI1238) (Vibrio salmonicida (strain LFI1238))).